The following is a 167-amino-acid chain: 2-amino-4-hydroxy-6-hydroxymethyldihydropteridine pyrophosphokinase (167 aa).

This sequence belongs to the HPPK family.

The enzyme catalyses 6-hydroxymethyl-7,8-dihydropterin + ATP = (7,8-dihydropterin-6-yl)methyl diphosphate + AMP + H(+). The protein operates within cofactor biosynthesis; tetrahydrofolate biosynthesis; 2-amino-4-hydroxy-6-hydroxymethyl-7,8-dihydropteridine diphosphate from 7,8-dihydroneopterin triphosphate: step 4/4. Catalyzes the transfer of pyrophosphate from adenosine triphosphate (ATP) to 6-hydroxymethyl-7,8-dihydropterin, an enzymatic step in folate biosynthesis pathway. The sequence is that of 2-amino-4-hydroxy-6-hydroxymethyldihydropteridine pyrophosphokinase (folK) from Bacillus subtilis (strain 168).